A 248-amino-acid polypeptide reads, in one-letter code: tRNA (guanine-N(1)-)-methyltransferase (248 aa).

S-adenosyl-L-methionine-binding positions include G116 and 136–141 (VGDYVL).

Belongs to the RNA methyltransferase TrmD family. As to quaternary structure, homodimer.

It localises to the cytoplasm. It catalyses the reaction guanosine(37) in tRNA + S-adenosyl-L-methionine = N(1)-methylguanosine(37) in tRNA + S-adenosyl-L-homocysteine + H(+). Its function is as follows. Specifically methylates guanosine-37 in various tRNAs. This is tRNA (guanine-N(1)-)-methyltransferase from Psychromonas ingrahamii (strain DSM 17664 / CCUG 51855 / 37).